Consider the following 374-residue polypeptide: MPGVGISRIVRIAVAALVALAPLMTPAHATSRIKDLANIEGVRQNQLIGYGLVVGLNGTGDTLNNIPFTKQSLQAMLERMGVNIRGATIRTGNVAAVMVTGNLPAFATQGTRMDVTVSAMGDAKSLHGGTLLVTPLLGADGNVYAVAQGSLAIGGFAAEGAAASVTKGVPTNGRIANGAIVEREIEFALNKMPNVRLALRNGDFTTAKRIAAAVNDFLGTKTAEPIDPSTVQLSIPAEFKGNVVALLTEIEQLQVEPDTAAKIIIDERSGIIVMGRDVRVATVAVAQGNLTVSISESPQVSQPNPLSRGRTVVTPRTAVGVTEDGKKLALVKNGVSLQELVDGLNGLGIGPRDLIGILQAIKAAGAIEADIEVM.

The signal sequence occupies residues 1–29 (MPGVGISRIVRIAVAALVALAPLMTPAHA).

It belongs to the FlgI family. As to quaternary structure, the basal body constitutes a major portion of the flagellar organelle and consists of four rings (L,P,S, and M) mounted on a central rod.

The protein resides in the periplasm. It localises to the bacterial flagellum basal body. In terms of biological role, assembles around the rod to form the L-ring and probably protects the motor/basal body from shearing forces during rotation. This is Flagellar P-ring protein from Nitrobacter hamburgensis (strain DSM 10229 / NCIMB 13809 / X14).